The following is a 277-amino-acid chain: PTS system sorbose-specific EIIC component (277 aa).

The next 5 helical transmembrane spans lie at 1 to 21 (MAISTIQIILIFIWSSVVGMG), 92 to 112 (IQKGIAIALPVAAAGQVLTVL), 133 to 153 (FTAIIWLHFTALIVQALRVSI), 177 to 197 (VITGGLAVAGGFIVVVGYAMI), and 219 to 239 (YLKLSLLAWGAVGLIFAIVYV). Positions 3-237 (ISTIQIILIF…GAVGLIFAIV (235 aa)) constitute a PTS EIIC type-4 domain.

The protein resides in the cell membrane. Functionally, the phosphoenolpyruvate-dependent sugar phosphotransferase system (PTS), a major carbohydrate active transport system, catalyzes the phosphorylation of incoming sugar substrates concomitant with their translocation across the cell membrane. The enzyme II SorABCD PTS system is involved in L-sorbose transport. This Lacticaseibacillus casei (Lactobacillus casei) protein is PTS system sorbose-specific EIIC component.